The sequence spans 412 residues: UPF0761 membrane protein LPC_2650 (412 aa).

Helical transmembrane passes span 36-56, 99-119, 137-157, 177-197, 210-230, and 241-261; these read ALAFTSLLAVVPLMSVGLAIF, LSIWGVVFLIFTALLVMFTIE, AFLLYWAIISLAPVLLGLSLA, ILHYSPFFLSLIGFTFLYVVV, GGLVAAILFESAKHAFAYYLI, and AFATVPIFFIWVYWVWIITLL.

It belongs to the UPF0761 family.

It is found in the cell inner membrane. The chain is UPF0761 membrane protein LPC_2650 from Legionella pneumophila (strain Corby).